Consider the following 505-residue polypeptide: Deoxyguanosinetriphosphate triphosphohydrolase (505 aa).

Residues 66–273 form the HD domain; sequence RLTHSMEVQQ…MEAADDISYC (208 aa).

The protein belongs to the dGTPase family. Type 1 subfamily. In terms of assembly, homotetramer. Mg(2+) serves as cofactor.

It catalyses the reaction dGTP + H2O = 2'-deoxyguanosine + triphosphate + H(+). DGTPase preferentially hydrolyzes dGTP over the other canonical NTPs. The polypeptide is Deoxyguanosinetriphosphate triphosphohydrolase (Escherichia coli O139:H28 (strain E24377A / ETEC)).